The primary structure comprises 375 residues: MLTASNTKAPEQTKVIVGMSGGVDSSVSAYLLKEQGYQVEGLFMKNWEEDDTDEYCAASQDLEDAQAICDKLDIKLHTINFATEYWDNVFEYFLAEYKAGRTPNPDIMCNKEIKFKAFLEFACEDLGADYIATGHYVQRELRDNSWKMIRGLDNNKDQSYFLYTLDEAQLAHTLFPVGHIEKPEVRAIAEKAGLITHNKKDSTGICFIGERKFKDFLGQYLPAQPGIIESAEGVAVGHHDGLMYHTLGQRKGLRIGGLADAGEEPWYVVEKDLLRNVLIVGQGHNHPRLFSKGLIANQLHWVDRKALTSSIQCTVKTRYRQEDVSCTVTPITDSATEEYQIDFTEQQSSVTPGQSVVFYKDDVCLGGGIIDTLIR.

Residues G18–S25 and M44 contribute to the ATP site. Positions N104–D106 are interaction with target base in tRNA. C109 (nucleophile) is an active-site residue. An intrachain disulfide couples C109 to C206. G134 provides a ligand contact to ATP. Residues K156–Q158 are interaction with tRNA. C206 acts as the Cysteine persulfide intermediate in catalysis. Positions R318–Y319 are interaction with tRNA.

This sequence belongs to the MnmA/TRMU family.

The protein resides in the cytoplasm. The enzyme catalyses S-sulfanyl-L-cysteinyl-[protein] + uridine(34) in tRNA + AH2 + ATP = 2-thiouridine(34) in tRNA + L-cysteinyl-[protein] + A + AMP + diphosphate + H(+). Functionally, catalyzes the 2-thiolation of uridine at the wobble position (U34) of tRNA, leading to the formation of s(2)U34. The polypeptide is tRNA-specific 2-thiouridylase MnmA (Colwellia psychrerythraea (strain 34H / ATCC BAA-681) (Vibrio psychroerythus)).